Reading from the N-terminus, the 231-residue chain is Probable septum site-determining protein MinC (231 aa).

Positions 102–125 are disordered; the sequence is KEKAPRPAPAPQAPAQNTTPVTKT.

It belongs to the MinC family. In terms of assembly, interacts with MinD and FtsZ.

In terms of biological role, cell division inhibitor that blocks the formation of polar Z ring septums. Rapidly oscillates between the poles of the cell to destabilize FtsZ filaments that have formed before they mature into polar Z rings. Prevents FtsZ polymerization. This Escherichia coli O139:H28 (strain E24377A / ETEC) protein is Probable septum site-determining protein MinC.